The chain runs to 119 residues: MKKSYRVKSEKDFNAIFNDKQSVANKRFVIYKLDKDQKHFRVGLSVSKKLGNAVVRNGIKRKIRHVLIEHRQELQAVDFVIIARKGVEELDYKETERNLLHVLKLAKIYQEGIPSEKEE.

It belongs to the RnpA family. In terms of assembly, consists of a catalytic RNA component (M1 or rnpB) and a protein subunit.

The enzyme catalyses Endonucleolytic cleavage of RNA, removing 5'-extranucleotides from tRNA precursor.. Its function is as follows. RNaseP catalyzes the removal of the 5'-leader sequence from pre-tRNA to produce the mature 5'-terminus. It can also cleave other RNA substrates such as 4.5S RNA. The protein component plays an auxiliary but essential role in vivo by binding to the 5'-leader sequence and broadening the substrate specificity of the ribozyme. This is Ribonuclease P protein component from Streptococcus gordonii (strain Challis / ATCC 35105 / BCRC 15272 / CH1 / DL1 / V288).